The chain runs to 477 residues: P3 protein (477 aa).

Residues 1-21 (MVFRSGEGHSLQWPGPEGGTG) form a disordered region. A run of 8 helical transmembrane segments spans residues 225 to 245 (PMLL…FLMA), 253 to 273 (ALAL…SYLF), 281 to 301 (VTLA…FLPL), 320 to 340 (VSKI…GVVI), 361 to 381 (VLLL…LAGV), 383 to 403 (LPIV…GYGL), 417 to 437 (VSIE…QLSL), and 450 to 470 (FLVA…HFIY).

Belongs to the bile acid:sodium symporter (BASS) (TC 2.A.28) family.

The protein localises to the membrane. The ubiquitous expression and the conservation of the sequence in distant animal species suggest that the gene codes for a protein with housekeeping functions. This chain is P3 protein (SLC10A3), found in Bos taurus (Bovine).